Reading from the N-terminus, the 323-residue chain is MPSVSEAKREYEERFNGCLTKYGRVLFCLMDNVRSQQVHDVRRDLRGLGELVMGKKTLQKKIVERRAEDKKASAYDKLLYNTCIEKKLLCGNTALIFTNEEIPVITAVLDKHRVQAPARVGAIAPCDVIVPAGNTGMEPKATSFFQALNIATKIAKGTVEIVSDKKVLSVGDRVDNSTATLLQKLDISPFYYQVEVQSVWDRGMLFLREDLSITDDVVEKYLLEGISNVAALSLGAGIPTAATLPHMIMDAFKTLLGASVATEYEFDEFDGKNLRKAALEGNLGGGVADAAAAADTGAAAAPAAAAEPEEEDDDDDFGMGALF.

Residues 298–323 are disordered; it reads AAAAPAAAAEPEEEDDDDDFGMGALF. The span at 307–317 shows a compositional bias: acidic residues; the sequence is EPEEEDDDDDF.

It belongs to the universal ribosomal protein uL10 family. In terms of assembly, P0 forms a pentameric complex by interaction with dimers of P1 and P2. Post-translationally, phosphorylated.

Its function is as follows. Ribosomal protein P0 is the functional equivalent of E.coli protein L10. The protein is Large ribosomal subunit protein uL10 of Trypanosoma cruzi.